A 149-amino-acid chain; its full sequence is Calmodulin-3 (149 aa).

N-acetylalanine is present on Ala-2. 4 consecutive EF-hand domains span residues 8–43 (DQIA…LGQN), 44–79 (PTEA…KMKD), 81–116 (DSEE…LGEK), and 117–149 (LTDE…MMAK). Asp-21, Asp-23, Asp-25, Cys-27, Glu-32, Asp-57, Asp-59, Asn-61, Thr-63, Glu-68, Asp-94, Asp-96, Asn-98, and Glu-105 together coordinate Ca(2+). The residue at position 116 (Lys-116) is an N6,N6,N6-trimethyllysine. Ca(2+) contacts are provided by Asp-130, Asp-132, Asp-134, Gln-136, and Glu-141.

The protein belongs to the calmodulin family.

Its function is as follows. Calmodulin mediates the control of a large number of enzymes, ion channels and other proteins by Ca(2+). Among the enzymes to be stimulated by the calmodulin-Ca(2+) complex are a number of protein kinases and phosphatases. This chain is Calmodulin-3 (CAM3), found in Oryza sativa subsp. indica (Rice).